Consider the following 322-residue polypeptide: Putative small RNA degrading nuclease 4 (322 aa).

An Exonuclease domain is found at 75–213 (MLALDCEMVL…HDAAAAMKLA (139 aa)).

It belongs to the REXO1/REXO3 family.

The protein resides in the nucleus. Putative 3'-5' exonuclease degrading single-stranded small RNAs. The chain is Putative small RNA degrading nuclease 4 (SDN4) from Arabidopsis thaliana (Mouse-ear cress).